Reading from the N-terminus, the 69-residue chain is Pleurain-A4 (69 aa).

Positions Met-1–Cys-22 are cleaved as a signal peptide. A propeptide spanning residues Lys-23–Arg-43 is cleaved from the precursor. Cysteines 63 and 69 form a disulfide.

The protein belongs to the frog skin active peptide (FSAP) family. Pleurain subfamily. As to expression, expressed by the skin glands.

It is found in the secreted. Antimicrobial peptide. Has activity against Gram-positive and -negative bacteria, and fungi. Has little hemolytic activity on red blood cells. The chain is Pleurain-A4 from Nidirana pleuraden (Yunnan pond frog).